Consider the following 101-residue polypeptide: Small ribosomal subunit protein uS14 (101 aa).

Belongs to the universal ribosomal protein uS14 family. As to quaternary structure, part of the 30S ribosomal subunit. Contacts proteins S3 and S10.

Binds 16S rRNA, required for the assembly of 30S particles and may also be responsible for determining the conformation of the 16S rRNA at the A site. This chain is Small ribosomal subunit protein uS14, found in Leifsonia xyli subsp. xyli (strain CTCB07).